We begin with the raw amino-acid sequence, 570 residues long: Glucan 1,3-beta-glucosidase 2 (570 aa).

Residues N91, N116, N121, N184, N203, and N248 are each glycosylated (N-linked (GlcNAc...) asparagine). E338 functions as the Proton donor in the catalytic mechanism. N364 carries an N-linked (GlcNAc...) asparagine glycan. Residue E439 is the Nucleophile of the active site. 2 N-linked (GlcNAc...) asparagine glycosylation sites follow: N525 and N552.

The protein belongs to the glycosyl hydrolase 5 (cellulase A) family.

The protein resides in the secreted. It catalyses the reaction Successive hydrolysis of beta-D-glucose units from the non-reducing ends of (1-&gt;3)-beta-D-glucans, releasing alpha-glucose.. This is Glucan 1,3-beta-glucosidase 2 (exg2) from Schizosaccharomyces pombe (strain 972 / ATCC 24843) (Fission yeast).